Reading from the N-terminus, the 61-residue chain is Metallothionein-1B (61 aa).

The segment at 1–29 (MDPNCSCTTGGSCACAGSCKCKECKCTSC) is beta. Residues C5, C7, C13, C15, C19, C21, C24, C26, C29, C33, C34, C36, C37, C41, C44, C48, C50, C57, C59, and C60 each coordinate a divalent metal cation. The alpha stretch occupies residues 30-61 (KKCCCSCCPVGCAKCAQGCVCKGSSEKCRCCA).

The protein belongs to the metallothionein superfamily. Type 1 family. In terms of assembly, monomer.

Metallothioneins have a high content of cysteine residues that bind various heavy metals; these proteins are transcriptionally regulated by both heavy metals and glucocorticoids. This is Metallothionein-1B (MT1B) from Homo sapiens (Human).